We begin with the raw amino-acid sequence, 160 residues long: Small ribosomal subunit protein uS7 (160 aa).

The protein belongs to the universal ribosomal protein uS7 family. In terms of assembly, part of the 30S ribosomal subunit. Contacts proteins S9 and S11.

One of the primary rRNA binding proteins, it binds directly to 16S rRNA where it nucleates assembly of the head domain of the 30S subunit. Is located at the subunit interface close to the decoding center, probably blocks exit of the E-site tRNA. The sequence is that of Small ribosomal subunit protein uS7 from Rickettsia massiliae (strain Mtu5).